A 104-amino-acid polypeptide reads, in one-letter code: Large ribosomal subunit protein bL21 (104 aa).

The protein belongs to the bacterial ribosomal protein bL21 family. In terms of assembly, part of the 50S ribosomal subunit. Contacts protein L20.

In terms of biological role, this protein binds to 23S rRNA in the presence of protein L20. The chain is Large ribosomal subunit protein bL21 from Tropheryma whipplei (strain Twist) (Whipple's bacillus).